Here is an 81-residue protein sequence, read N- to C-terminus: Penaeidin-3c (81 aa).

The first 19 residues, 1–19 (MRLVVCLVFLASFALVCQG), serve as a signal peptide directing secretion. Pyrrolidone carboxylic acid is present on Gln-20. Intrachain disulfides connect Cys-50–Cys-65, Cys-54–Cys-72, and Cys-66–Cys-73. Position 80 is a serine amide (Ser-80).

It belongs to the penaeidin family. In terms of tissue distribution, higher expression in hemocytes and to a lesser extent in heart, testis, gills, intestine, lymphoid organ and hepatopancreas. Traces in eyes and subcuticular epithelium. Not present in the brain.

The protein resides in the cytoplasmic granule. In terms of biological role, antibacterial activity against M.luteus and E.coli bacteria. Antifungal activity against N.crassa and F.oxysporum. Presents chitin-binding activity. This chain is Penaeidin-3c, found in Penaeus vannamei (Whiteleg shrimp).